Here is a 331-residue protein sequence, read N- to C-terminus: Ketol-acid reductoisomerase (NADP(+)) (331 aa).

One can recognise a KARI N-terminal Rossmann domain in the interval 2–182 (AQLFYDSDAD…GGTRAGILET (181 aa)). NADP(+) contacts are provided by residues 25–28 (YGSQ), Ser51, Ser53, and 83–86 (DEFQ). Residue His108 is part of the active site. Gly134 provides a ligand contact to NADP(+). The KARI C-terminal knotted domain maps to 183–328 (NFKEETETDL…KGLRAMFSWL (146 aa)). Mg(2+) is bound by residues Asp191, Glu195, Glu227, and Glu231. A substrate-binding site is contributed by Ser252.

The protein belongs to the ketol-acid reductoisomerase family. It depends on Mg(2+) as a cofactor.

The catalysed reaction is (2R)-2,3-dihydroxy-3-methylbutanoate + NADP(+) = (2S)-2-acetolactate + NADPH + H(+). It catalyses the reaction (2R,3R)-2,3-dihydroxy-3-methylpentanoate + NADP(+) = (S)-2-ethyl-2-hydroxy-3-oxobutanoate + NADPH + H(+). It participates in amino-acid biosynthesis; L-isoleucine biosynthesis; L-isoleucine from 2-oxobutanoate: step 2/4. Its pathway is amino-acid biosynthesis; L-valine biosynthesis; L-valine from pyruvate: step 2/4. Involved in the biosynthesis of branched-chain amino acids (BCAA). Catalyzes an alkyl-migration followed by a ketol-acid reduction of (S)-2-acetolactate (S2AL) to yield (R)-2,3-dihydroxy-isovalerate. In the isomerase reaction, S2AL is rearranged via a Mg-dependent methyl migration to produce 3-hydroxy-3-methyl-2-ketobutyrate (HMKB). In the reductase reaction, this 2-ketoacid undergoes a metal-dependent reduction by NADPH to yield (R)-2,3-dihydroxy-isovalerate. This Prochlorococcus marinus (strain MIT 9313) protein is Ketol-acid reductoisomerase (NADP(+)).